A 143-amino-acid chain; its full sequence is MSHDSDDKTYPYQKDDAELRRRLTPMQYEVTQHAATERAFTGEYTDTEDAGIYKCVVCSTPLFESGAKFHSGCGWPSYFKPLNGEVIDEKIDRSHGMVRVEVRCNHCGAHLGHVFEDGPRDQTGLRYCINSAALNFESRPENE.

The MsrB domain maps to 16–139 (DAELRRRLTP…NSAALNFESR (124 aa)). Positions 55, 58, 104, and 107 each coordinate Zn(2+). Residue Cys128 is the Nucleophile of the active site.

This sequence belongs to the MsrB Met sulfoxide reductase family. The cofactor is Zn(2+).

The enzyme catalyses L-methionyl-[protein] + [thioredoxin]-disulfide + H2O = L-methionyl-(R)-S-oxide-[protein] + [thioredoxin]-dithiol. In Burkholderia vietnamiensis (strain G4 / LMG 22486) (Burkholderia cepacia (strain R1808)), this protein is Peptide methionine sulfoxide reductase MsrB.